A 166-amino-acid chain; its full sequence is MLPLLIICLLPAIEGKNCLRCWPELSALIDYDLQILWVTPGPPTELSQNRDHLEEETAKFFTQVHQAIKTLRDDKTVLLEEIYTHKNLFTERLNKISDGLKEKDIQSTLKVTSCADCRTHFLSCNDPTFCPARNRRTSLWAVSLSSALLLAIAGDVSFTGKGRRRQ.

The N-terminal stretch at 1–15 (MLPLLIICLLPAIEG) is a signal peptide. A helical membrane pass occupies residues 138 to 154 (SLWAVSLSSALLLAIAG).

It localises to the membrane. This is Testis-expressed protein 51 from Homo sapiens (Human).